The sequence spans 229 residues: Potassium/proton antiporter CemA (229 aa).

3 consecutive transmembrane segments (helical) span residues 7 to 27, 114 to 134, and 189 to 209; these read FTPL…SLSF, IICF…LVIL, and ILSG…KFWI.

Belongs to the CemA family.

It is found in the plastid. The protein localises to the chloroplast inner membrane. The catalysed reaction is K(+)(in) + H(+)(out) = K(+)(out) + H(+)(in). In terms of biological role, contributes to K(+)/H(+) antiport activity by supporting proton efflux to control proton extrusion and homeostasis in chloroplasts in a light-dependent manner to modulate photosynthesis. Prevents excessive induction of non-photochemical quenching (NPQ) under continuous-light conditions. Indirectly promotes efficient inorganic carbon uptake into chloroplasts. This Panax ginseng (Korean ginseng) protein is Potassium/proton antiporter CemA.